The sequence spans 326 residues: 4-hydroxythreonine-4-phosphate dehydrogenase (326 aa).

Threonine 132 lines the substrate pocket. 3 residues coordinate a divalent metal cation: histidine 160, histidine 205, and histidine 260. Residues lysine 268, asparagine 277, and arginine 286 each coordinate substrate.

The protein belongs to the PdxA family. In terms of assembly, homodimer. Zn(2+) serves as cofactor. Requires Mg(2+) as cofactor. The cofactor is Co(2+).

The protein localises to the cytoplasm. It catalyses the reaction 4-(phosphooxy)-L-threonine + NAD(+) = 3-amino-2-oxopropyl phosphate + CO2 + NADH. Its pathway is cofactor biosynthesis; pyridoxine 5'-phosphate biosynthesis; pyridoxine 5'-phosphate from D-erythrose 4-phosphate: step 4/5. Its function is as follows. Catalyzes the NAD(P)-dependent oxidation of 4-(phosphooxy)-L-threonine (HTP) into 2-amino-3-oxo-4-(phosphooxy)butyric acid which spontaneously decarboxylates to form 3-amino-2-oxopropyl phosphate (AHAP). This is 4-hydroxythreonine-4-phosphate dehydrogenase from Stenotrophomonas maltophilia (strain K279a).